A 224-amino-acid polypeptide reads, in one-letter code: Urease accessory protein UreF (224 aa).

This sequence belongs to the UreF family. UreD, UreF and UreG form a complex that acts as a GTP-hydrolysis-dependent molecular chaperone, activating the urease apoprotein by helping to assemble the nickel containing metallocenter of UreC. The UreE protein probably delivers the nickel.

The protein localises to the cytoplasm. Required for maturation of urease via the functional incorporation of the urease nickel metallocenter. The sequence is that of Urease accessory protein UreF from Pseudomonas fluorescens (strain Pf0-1).